The primary structure comprises 660 residues: DNA mismatch repair protein MutL (660 aa).

The protein belongs to the DNA mismatch repair MutL/HexB family.

This protein is involved in the repair of mismatches in DNA. It is required for dam-dependent methyl-directed DNA mismatch repair. May act as a 'molecular matchmaker', a protein that promotes the formation of a stable complex between two or more DNA-binding proteins in an ATP-dependent manner without itself being part of a final effector complex. The chain is DNA mismatch repair protein MutL from Solibacter usitatus (strain Ellin6076).